We begin with the raw amino-acid sequence, 165 residues long: E3 ubiquitin-protein ligase RNF181 (165 aa).

The segment at 88–129 (CPVCLLEFEEEETVIEMPCHHLFHSNCILPWLSKTNSCPLCR) adopts an RING-type; atypical zinc-finger fold. The segment at 136-165 (DDSYEEHKKDKARRQQQQHRLENLHGAMYT) is disordered. Threonine 165 carries the phosphothreonine modification.

The protein belongs to the RNF181 family. As to quaternary structure, directly interacts with ITGA2B and, as a result, with integrin ITGA2B/ITGB3. There is no evidence that integrin ITGA2B/ITGB3 is an endogenous substrate for RNF181-directed ubiquitination. Auto-ubiquitinated as part of the enzymatic reaction.

The enzyme catalyses S-ubiquitinyl-[E2 ubiquitin-conjugating enzyme]-L-cysteine + [acceptor protein]-L-lysine = [E2 ubiquitin-conjugating enzyme]-L-cysteine + N(6)-ubiquitinyl-[acceptor protein]-L-lysine.. The protein operates within protein modification; protein ubiquitination. Functionally, E3 ubiquitin-protein ligase which accepts ubiquitin from an E2 ubiquitin-conjugating enzyme in the form of a thioester and then directly transfers the ubiquitin to targeted substrates. Catalyzes monoubiquitination of 26S proteasome subunit PSMC2/RPT1. The protein is E3 ubiquitin-protein ligase RNF181 (Rnf181) of Rattus norvegicus (Rat).